A 330-amino-acid chain; its full sequence is MPDFLSITLSGVPPSLTSGETSNLKWQWVDEGVLMLTPHGACSQSVVLSAGIHGNETAPIEILNQLVSDLLASQLPLAVRLLVILGNPPAIRAGERYLTADINRMFGGRYKNHSLTDEARRAEILEQKVGEFFASDPLSLRLHYDLHTAIRGSHHNRFGLLPYRTTPYCAAMLRWLKDSELDALVMHTSAGGTFAHFSSEFCQAASCTLELGKALPFGQNQLEQFRPITAGLRALVSGGQLPTRSTEAMIFYRVVKSLLKQHADFKLWVADDTVNFTRYPQGTLMIEQLNEHYCVEHEYEWILFPNPRVALGLRAGIMLVQMDENDLLQA.

Zn(2+) contacts are provided by His53, Glu56, and His147. The active site involves Glu210.

This sequence belongs to the AspA/AstE family. Succinylglutamate desuccinylase subfamily. Zn(2+) serves as cofactor.

It carries out the reaction N-succinyl-L-glutamate + H2O = L-glutamate + succinate. It functions in the pathway amino-acid degradation; L-arginine degradation via AST pathway; L-glutamate and succinate from L-arginine: step 5/5. Functionally, transforms N(2)-succinylglutamate into succinate and glutamate. The protein is Succinylglutamate desuccinylase of Yersinia enterocolitica serotype O:8 / biotype 1B (strain NCTC 13174 / 8081).